The primary structure comprises 332 residues: L-lactate dehydrogenase A chain (332 aa).

An N-acetylalanine modification is found at A2. K5 bears the N6-acetyllysine; alternate mark. K5 carries the N6-succinyllysine; alternate modification. The residue at position 14 (K14) is an N6-acetyllysine. Position 29 to 57 (29 to 57 (GAVGMACAISILMKDLADEVALVDVMEDK)) interacts with NAD(+). Position 57 is an N6-acetyllysine; alternate (K57). K57 participates in a covalent cross-link: Glycyl lysine isopeptide (Lys-Gly) (interchain with G-Cter in SUMO2); alternate. K81 bears the N6-acetyllysine mark. R106 is a binding site for substrate. Residue K118 is modified to N6-acetyllysine; alternate. K118 carries the N6-succinyllysine; alternate modification. Residue K126 is modified to N6-acetyllysine. N138 contributes to the NAD(+) binding site. Substrate contacts are provided by N138 and R169. The Proton acceptor role is filled by H193. An N6-acetyllysine mark is found at K224 and K232. Y239 is subject to Phosphotyrosine. K243 carries the post-translational modification N6-acetyllysine. T248 is a substrate binding site. The residue at position 309 (T309) is a Phosphothreonine. K318 is subject to N6-acetyllysine; alternate. Position 318 is an N6-succinyllysine; alternate (K318). Position 322 is a phosphothreonine (T322).

It belongs to the LDH/MDH superfamily. LDH family. Homotetramer. Interacts with PTEN upstream reading frame protein MP31. In terms of processing, ISGylated.

Its subcellular location is the cytoplasm. The enzyme catalyses (S)-lactate + NAD(+) = pyruvate + NADH + H(+). It participates in fermentation; pyruvate fermentation to lactate; (S)-lactate from pyruvate: step 1/1. Functionally, interconverts simultaneously and stereospecifically pyruvate and lactate with concomitant interconversion of NADH and NAD(+). The sequence is that of L-lactate dehydrogenase A chain (LDHA) from Bos taurus (Bovine).